A 289-amino-acid polypeptide reads, in one-letter code: MIPIEIDSGSGFCFGVVNAIRHAEKQLEKSSDKLYCLGDIVHNTLEVERLGKKGLETIDYDAFSRLRGAKVLLRAHGEPPEIYRMAGENGVTIIDATCPVVLRLQNKIKSRYEATRSLGAQVVIYGKRGHAEVNGLVGQTEGTAIVIESEEELDKIDYTRPVILFSQTTKSLEGFGQIIDSISTRMQPGVTFEHHDTICRQVANRIPHIGAFATAHELVFFVAGEKSSNGKVLFGHCLAANPRSIFISSPEVIVPDMLVPLPASIGICGATSTPRWQMEEVASHIKALL.

[4Fe-4S] cluster is bound at residue C13. (2E)-4-hydroxy-3-methylbut-2-enyl diphosphate is bound by residues H42 and H76. 2 residues coordinate dimethylallyl diphosphate: H42 and H76. Residues H42 and H76 each coordinate isopentenyl diphosphate. C98 lines the [4Fe-4S] cluster pocket. H130 is a (2E)-4-hydroxy-3-methylbut-2-enyl diphosphate binding site. H130 contributes to the dimethylallyl diphosphate binding site. H130 contributes to the isopentenyl diphosphate binding site. E132 acts as the Proton donor in catalysis. T168 lines the (2E)-4-hydroxy-3-methylbut-2-enyl diphosphate pocket. Position 199 (C199) interacts with [4Fe-4S] cluster. Positions 227, 228, 229, and 272 each coordinate (2E)-4-hydroxy-3-methylbut-2-enyl diphosphate. 4 residues coordinate dimethylallyl diphosphate: S227, S228, N229, and S272. Isopentenyl diphosphate contacts are provided by S227, S228, N229, and S272.

The protein belongs to the IspH family. Requires [4Fe-4S] cluster as cofactor.

It catalyses the reaction isopentenyl diphosphate + 2 oxidized [2Fe-2S]-[ferredoxin] + H2O = (2E)-4-hydroxy-3-methylbut-2-enyl diphosphate + 2 reduced [2Fe-2S]-[ferredoxin] + 2 H(+). The enzyme catalyses dimethylallyl diphosphate + 2 oxidized [2Fe-2S]-[ferredoxin] + H2O = (2E)-4-hydroxy-3-methylbut-2-enyl diphosphate + 2 reduced [2Fe-2S]-[ferredoxin] + 2 H(+). The protein operates within isoprenoid biosynthesis; dimethylallyl diphosphate biosynthesis; dimethylallyl diphosphate from (2E)-4-hydroxy-3-methylbutenyl diphosphate: step 1/1. It participates in isoprenoid biosynthesis; isopentenyl diphosphate biosynthesis via DXP pathway; isopentenyl diphosphate from 1-deoxy-D-xylulose 5-phosphate: step 6/6. Its function is as follows. Catalyzes the conversion of 1-hydroxy-2-methyl-2-(E)-butenyl 4-diphosphate (HMBPP) into a mixture of isopentenyl diphosphate (IPP) and dimethylallyl diphosphate (DMAPP). Acts in the terminal step of the DOXP/MEP pathway for isoprenoid precursor biosynthesis. The chain is 4-hydroxy-3-methylbut-2-enyl diphosphate reductase from Porphyromonas gingivalis (strain ATCC BAA-308 / W83).